The primary structure comprises 78 residues: Dihydrofolate reductase type 2 (78 aa).

NADP(+)-binding positions include lysine 32 and valine 66–tyrosine 69. Isoleucine 68 serves as a coordination point for substrate.

As to quaternary structure, homotetramer.

It carries out the reaction (6S)-5,6,7,8-tetrahydrofolate + NADP(+) = 7,8-dihydrofolate + NADPH + H(+). It participates in cofactor biosynthesis; tetrahydrofolate biosynthesis; 5,6,7,8-tetrahydrofolate from 7,8-dihydrofolate: step 1/1. Functionally, key enzyme in folate metabolism. Catalyzes an essential reaction for de novo glycine and purine synthesis, and for DNA precursor synthesis. This chain is Dihydrofolate reductase type 2, found in Escherichia coli.